The primary structure comprises 186 residues: ATP synthase subunit b, chloroplastic (186 aa).

A helical membrane pass occupies residues 26–44 (ILETNLINLGVVIGTLLYF).

Belongs to the ATPase B chain family. As to quaternary structure, F-type ATPases have 2 components, F(1) - the catalytic core - and F(0) - the membrane proton channel. F(1) has five subunits: alpha(3), beta(3), gamma(1), delta(1), epsilon(1). F(0) has four main subunits: a(1), b(1), b'(1) and c(10-14). The alpha and beta chains form an alternating ring which encloses part of the gamma chain. F(1) is attached to F(0) by a central stalk formed by the gamma and epsilon chains, while a peripheral stalk is formed by the delta, b and b' chains.

It is found in the plastid. It localises to the chloroplast thylakoid membrane. In terms of biological role, f(1)F(0) ATP synthase produces ATP from ADP in the presence of a proton or sodium gradient. F-type ATPases consist of two structural domains, F(1) containing the extramembraneous catalytic core and F(0) containing the membrane proton channel, linked together by a central stalk and a peripheral stalk. During catalysis, ATP synthesis in the catalytic domain of F(1) is coupled via a rotary mechanism of the central stalk subunits to proton translocation. Component of the F(0) channel, it forms part of the peripheral stalk, linking F(1) to F(0). The polypeptide is ATP synthase subunit b, chloroplastic (Chara vulgaris (Common stonewort)).